Here is an 876-residue protein sequence, read N- to C-terminus: Alanine--tRNA ligase (876 aa).

Residues H560, H564, C662, and H666 each coordinate Zn(2+).

This sequence belongs to the class-II aminoacyl-tRNA synthetase family. Zn(2+) serves as cofactor.

It localises to the cytoplasm. It catalyses the reaction tRNA(Ala) + L-alanine + ATP = L-alanyl-tRNA(Ala) + AMP + diphosphate. In terms of biological role, catalyzes the attachment of alanine to tRNA(Ala) in a two-step reaction: alanine is first activated by ATP to form Ala-AMP and then transferred to the acceptor end of tRNA(Ala). Also edits incorrectly charged Ser-tRNA(Ala) and Gly-tRNA(Ala) via its editing domain. The protein is Alanine--tRNA ligase of Synechococcus elongatus (strain ATCC 33912 / PCC 7942 / FACHB-805) (Anacystis nidulans R2).